Here is a 1785-residue protein sequence, read N- to C-terminus: Mellein synthase (1785 aa).

Residues 1–36 (MATPDDPATPALSLSASNSSSPTAASSVPPPTGTSE) form a disordered region. Low complexity predominate over residues 8–27 (ATPALSLSASNSSSPTAASS). The Ketosynthase family 3 (KS3) domain occupies 39 to 464 (YDDVAIIGMS…GTVSHAIIEQ (426 aa)). Active-site for beta-ketoacyl synthase activity residues include C211, H346, and H386. The interval 575 to 888 (VWVFSGHGSH…AVAQLWTKGV (314 aa)) is malonyl-CoA:ACP transacylase (MAT) domain. S661 (for malonyltransferase activity) is an active-site residue. The N-terminal hotdog fold stretch occupies residues 933 to 1047 (NNMLGQRMVV…ASWENEPSAN (115 aa)). In terms of domain architecture, PKS/mFAS DH spans 933–1206 (NNMLGQRMVV…FTEVEATPTK (274 aa)). A dehydratase (DH) domain region spans residues 935–1203 (MLGQRMVVAG…SIRFTEVEAT (269 aa)). H965 serves as the catalytic Proton acceptor; for dehydratase activity. Residues 1062–1206 (GTRVSETFSV…FTEVEATPTK (145 aa)) are C-terminal hotdog fold. Residue D1123 is the Proton donor; for dehydratase activity of the active site. Residues 1418 to 1608 (GTYVLTGGLG…AIAFQWTAWR (191 aa)) form a ketoreductase (KR) domain region. Over residues 1681-1698 (QDQSAPASGNASDSSGRP) the composition is skewed to polar residues. Positions 1681 to 1701 (QDQSAPASGNASDSSGRPTAS) are disordered. One can recognise a Carrier domain in the interval 1706–1781 (PWLDVKIREC…AMVGWFQKQF (76 aa)). S1741 bears the O-(pantetheine 4'-phosphoryl)serine mark.

It functions in the pathway secondary metabolite biosynthesis. Its function is as follows. Polyketide synthase that produces (R)-mellein, a secondary metabolite that inhibits the germination of wheat (Triticum aestivum) and barrel medic (Medicago truncatula) seeds. Condensates 1 acetate starter unit and 4 extender malonate units. The nascent pentaketide intermediate then undergoes an aldol cyclization and is aromatized via dehydration. The (R)-O-methylmellein isolated from P.nodorum is most likely to be derived from (R)-mellein via an additional methylation at the hydroxyl group. Interestingly, no O-methyltransferase gene is encoded in the vicinity of MLNS on the chromosome. Thus, the O-methylation is likely to be catalyzed by an endogenous O-methyltransferase encoded elsewhere in the genome of P.nodorum. This chain is Mellein synthase, found in Phaeosphaeria nodorum (strain SN15 / ATCC MYA-4574 / FGSC 10173) (Glume blotch fungus).